A 294-amino-acid polypeptide reads, in one-letter code: MSQFSCVGLIGRLDSDNAAYSLRRLISFLAKQNIEVMLDEETAEFYTENELEIVSRETLAKRCDLIIVVGGDGSLLSAARAFAGKPVKLLGINRGRLGFLTDISPDEIEYKVGEVLAGKYVSESRFLLHSQLYRGEELISEAVALNDVVMHPGQFIRMIEFELYINDEFVYRQRSDGLIISSPTGATAYALSCGGPIMHPSLDAIVLVPMNPHTLSSRPIVVHGSSRIRLLIAKDNHLSPHITNDGQTHVVTKPGDEVVVTKSPDLLELIHPTDHNFYETCRSKLGWASHTGGC.

The active-site Proton acceptor is the D72. Residues 72–73 (DG), 146–147 (ND), R157, R174, D176, 187–192 (TAYALS), and Q247 each bind NAD(+).

The protein belongs to the NAD kinase family. Requires a divalent metal cation as cofactor.

It localises to the cytoplasm. It carries out the reaction NAD(+) + ATP = ADP + NADP(+) + H(+). Functionally, involved in the regulation of the intracellular balance of NAD and NADP, and is a key enzyme in the biosynthesis of NADP. Catalyzes specifically the phosphorylation on 2'-hydroxyl of the adenosine moiety of NAD to yield NADP. This Saccharophagus degradans (strain 2-40 / ATCC 43961 / DSM 17024) protein is NAD kinase.